The chain runs to 312 residues: Ribosomal RNA small subunit methyltransferase H (312 aa).

Residues 35 to 37 (GGH), aspartate 55, phenylalanine 79, aspartate 101, and glutamine 108 contribute to the S-adenosyl-L-methionine site.

Belongs to the methyltransferase superfamily. RsmH family.

The protein resides in the cytoplasm. It carries out the reaction cytidine(1402) in 16S rRNA + S-adenosyl-L-methionine = N(4)-methylcytidine(1402) in 16S rRNA + S-adenosyl-L-homocysteine + H(+). Functionally, specifically methylates the N4 position of cytidine in position 1402 (C1402) of 16S rRNA. The polypeptide is Ribosomal RNA small subunit methyltransferase H (Buchnera aphidicola subsp. Acyrthosiphon pisum (strain APS) (Acyrthosiphon pisum symbiotic bacterium)).